We begin with the raw amino-acid sequence, 1049 residues long: Solvent-resistant pump membrane transporter SrpB (1049 aa).

Transmembrane regions (helical) follow at residues 10–30, 339–359, 366–386, 392–412, 440–460, 470–490, 542–562, 871–891, 895–915, 927–947, 973–993, and 1008–1028; these read IFAW…LAKM, SVVH…YLFL, LIPT…LPYF, VLTM…AIVV, GALV…AFFG, FAIT…VFTP, LAFL…PKAF, APLL…ALYE, VPVS…LATL, VGLM…VEFA, ILMT…ASGA, and GMIT…VVVV.

The protein belongs to the resistance-nodulation-cell division (RND) (TC 2.A.6) family.

It is found in the cell inner membrane. Its function is as follows. The inner membrane transporter component of an organic solvent efflux pump. Involved in export of a number of low log POW compounds including hexane (log POW 3.5), toluene (log POW 2.5) and dimethylphthalate (log POW 2.3). The solvent resistance phenotype has been postulated to depend on the operon expression level. The protein is Solvent-resistant pump membrane transporter SrpB (srpB) of Pseudomonas putida (Arthrobacter siderocapsulatus).